Here is a 448-residue protein sequence, read N- to C-terminus: Portal protein (448 aa).

The interval 1-25 is disordered; sequence MAKRGRKPKELVPGPGSIDPSDVPK.

Belongs to the P23virus portal protein family. Homododecamer. Interacts with the capsid protein. Interacts with the terminase large subunit; this interaction allows the packaging of viral DNA.

Its subcellular location is the virion. Its function is as follows. Forms the portal vertex of the capsid. This portal plays critical roles in head assembly, genome packaging, neck/tail attachment, and genome ejection. The portal protein multimerizes as a single ring-shaped homododecamer arranged around a central channel. Forms the portal vertex of the capsid. This portal plays critical roles in head assembly, genome packaging, neck/tail attachment, and genome ejection. In Thermus thermophilus (Thermus thermophilus phage P23-45), this protein is Portal protein.